Consider the following 714-residue polypeptide: Centromere/kinetochore protein zw10 (714 aa).

This sequence belongs to the ZW10 family.

Its subcellular location is the cytoplasm. The protein localises to the nucleus. The protein resides in the chromosome. It localises to the centromere. It is found in the kinetochore. In terms of biological role, required for accurate chromosome segregation. In Drosophila grimshawi (Hawaiian fruit fly), this protein is Centromere/kinetochore protein zw10 (mit(1)15).